Here is a 527-residue protein sequence, read N- to C-terminus: Glucose-6-phosphate isomerase (527 aa).

Residue glutamate 323 is the Proton donor of the active site. Active-site residues include histidine 352 and lysine 454.

This sequence belongs to the GPI family.

The protein localises to the cytoplasm. It catalyses the reaction alpha-D-glucose 6-phosphate = beta-D-fructose 6-phosphate. It functions in the pathway carbohydrate biosynthesis; gluconeogenesis. Its pathway is carbohydrate degradation; glycolysis; D-glyceraldehyde 3-phosphate and glycerone phosphate from D-glucose: step 2/4. Catalyzes the reversible isomerization of glucose-6-phosphate to fructose-6-phosphate. The protein is Glucose-6-phosphate isomerase of Prochlorococcus marinus (strain MIT 9515).